The following is a 308-amino-acid chain: Inactive C-alpha-formylglycine-generating enzyme 2 (308 aa).

The signal sequence occupies residues 1 to 33; the sequence is MRSEFWFPSMGSLLPPVLLLWLLSCPRLQLGHA. An intrachain disulfide couples Cys163 to Cys297. Asn198 is a glycosylation site (N-linked (GlcNAc...) asparagine). The Ca(2+) site is built by Asn201, Leu202, Asp215, Phe217, Asp236, Gly239, Val241, and Glu243. Polar residues predominate over residues 281-291; the sequence is RMGNTPDSASD. Residues 281–308 form a disordered region; the sequence is RMGNTPDSASDNLGFRCASSAGRPKEDL. A Non-canonical ER retention motif motif is present at residues 305–308; sequence KEDL.

It belongs to the sulfatase-modifying factor family. As to quaternary structure, homodimer and heterodimer with SUMF1.

It localises to the endoplasmic reticulum lumen. Functionally, lacks formylglycine generating activity and is unable to convert newly synthesized inactive sulfatases to their active form. Inhibits the activation of sulfatases by SUMF1. The chain is Inactive C-alpha-formylglycine-generating enzyme 2 from Mus musculus (Mouse).